The primary structure comprises 90 residues: Large ribosomal subunit protein bL27 (90 aa).

The disordered stretch occupies residues 1–21 (MAHTKAGGTTRNSRDSAGRRL).

Belongs to the bacterial ribosomal protein bL27 family.

This chain is Large ribosomal subunit protein bL27, found in Metamycoplasma arthritidis (strain 158L3-1) (Mycoplasma arthritidis).